The sequence spans 387 residues: Decapping nuclease RAI1 (387 aa).

Glu-172 is a binding site for a divalent metal cation. Phosphoserine is present on Ser-198. A substrate-binding site is contributed by Glu-221. A divalent metal cation contacts are provided by Asp-223, Glu-241, and Leu-242. Residues Lys-243 and Gln-267 each coordinate substrate. The tract at residues 273–387 (IPRIIYGFKD…GFKEWRKSLK (115 aa)) is interaction with RAT1.

This sequence belongs to the DXO/Dom3Z family. In terms of assembly, interacts with RAT1, RTT103 and pre-60S ribosomal subunits. Interacts with RAT1; the interaction is direct, stabilizes RAT1 protein structure and stimulates its exoribonuclease activity. The interaction also stimulates RAI1 pyrophosphohydrolase activity, probably by recruiting it to mRNA substrates. The cofactor is a divalent metal cation.

It is found in the nucleus. The enzyme catalyses a 5'-end NAD(+)-phospho-ribonucleoside in mRNA + H2O = a 5'-end phospho-ribonucleoside in mRNA + NAD(+) + H(+). It carries out the reaction a 5'-end (N(7)-methyl 5'-triphosphoguanosine)-ribonucleoside-ribonucleotide in mRNA + H2O = a (N(7)-methyl 5'-triphosphoguanosine)-nucleoside + a 5'-end phospho-ribonucleoside in mRNA + H(+). It catalyses the reaction a 5'-end triphospho-ribonucleoside in mRNA + H2O = a 5'-end phospho-ribonucleoside in mRNA + diphosphate + H(+). In terms of biological role, decapping enzyme for NAD-capped RNAs: specifically hydrolyzes the nicotinamide adenine dinucleotide (NAD) cap from a subset of RNAs by removing the entire NAD moiety from the 5'-end of an NAD-capped RNA. The NAD-cap is present at the 5'-end of some RNAs and snoRNAs. In contrast to the canonical 5'-end N7 methylguanosine (m7G) cap, the NAD cap promotes mRNA decay. Also acts as a non-canonical decapping enzyme that removes the entire cap structure of m7G capped or incompletely capped RNAs. Has decapping activity toward incomplete 5'-end m7G cap mRNAs such as unmethylated 5'-end-capped RNA (cap0), while it has no activity toward 2'-O-ribose methylated m7G cap (cap1). Also possesses RNA 5'-pyrophosphohydrolase activity by hydrolyzing the 5'-end triphosphate to release pyrophosphates. Stimulates exoribonuclease activity of RAT1, allowing it to degrade RNAs with stable secondary structure more effectively. Required for the processing of nuclear mRNA and rRNA precursors. May promote termination of transcription by RNA polymerase II. The protein is Decapping nuclease RAI1 of Saccharomyces cerevisiae (strain ATCC 204508 / S288c) (Baker's yeast).